The following is a 429-amino-acid chain: Probable M18 family aminopeptidase 2 (429 aa).

Residues H82, H156, and H401 each contribute to the Zn(2+) site.

It belongs to the peptidase M18 family. Zn(2+) serves as cofactor.

The polypeptide is Probable M18 family aminopeptidase 2 (Pseudomonas putida (strain GB-1)).